The following is a 367-amino-acid chain: Glutamate 5-kinase (367 aa).

Lysine 10 provides a ligand contact to ATP. Residues serine 50, aspartate 137, and asparagine 149 each contribute to the substrate site. ATP-binding positions include 169–170 (TD) and 211–217 (TGGMGTK). The 79-residue stretch at 275–353 (AGEITVDEGA…QQIDAILGYE (79 aa)) folds into the PUA domain.

Belongs to the glutamate 5-kinase family.

It localises to the cytoplasm. The enzyme catalyses L-glutamate + ATP = L-glutamyl 5-phosphate + ADP. Its pathway is amino-acid biosynthesis; L-proline biosynthesis; L-glutamate 5-semialdehyde from L-glutamate: step 1/2. Functionally, catalyzes the transfer of a phosphate group to glutamate to form L-glutamate 5-phosphate. The chain is Glutamate 5-kinase from Citrobacter koseri (strain ATCC BAA-895 / CDC 4225-83 / SGSC4696).